We begin with the raw amino-acid sequence, 218 residues long: Hypoxanthine-guanine phosphoribosyltransferase (218 aa).

N-acetylalanine is present on Ala2. Lys69 provides a ligand contact to GMP. At Lys103 the chain carries N6-acetyllysine. A Glycyl lysine isopeptide (Lys-Gly) (interchain with G-Cter in SUMO1); alternate cross-link involves residue Lys115. Lys115 is covalently cross-linked (Glycyl lysine isopeptide (Lys-Gly) (interchain with G-Cter in SUMO2); alternate). Residues 134–142 (EDIIDTGKT), Lys166, 186–188 (KFV), and Asp194 contribute to the GMP site. Residue Asp138 is the Proton acceptor of the active site. Position 142 is a phosphothreonine (Thr142). Position 194 (Asp194) interacts with Mg(2+).

It belongs to the purine/pyrimidine phosphoribosyltransferase family. As to quaternary structure, homotetramer. Mg(2+) serves as cofactor.

It is found in the cytoplasm. The enzyme catalyses IMP + diphosphate = hypoxanthine + 5-phospho-alpha-D-ribose 1-diphosphate. The catalysed reaction is GMP + diphosphate = guanine + 5-phospho-alpha-D-ribose 1-diphosphate. Its pathway is purine metabolism; IMP biosynthesis via salvage pathway; IMP from hypoxanthine: step 1/1. Functionally, converts guanine to guanosine monophosphate, and hypoxanthine to inosine monophosphate. Transfers the 5-phosphoribosyl group from 5-phosphoribosylpyrophosphate onto the purine. Plays a central role in the generation of purine nucleotides through the purine salvage pathway. The sequence is that of Hypoxanthine-guanine phosphoribosyltransferase (HPRT1) from Cricetulus griseus (Chinese hamster).